Consider the following 724-residue polypeptide: Methionine--tRNA ligase (724 aa).

Positions 12 to 22 (PYVNNIPHLGN) match the 'HIGH' region motif. 4 residues coordinate Zn(2+): C143, C146, C155, and C158. The 'KMSKS' region motif lies at 330–334 (KFSKS). K333 lines the ATP pocket. Positions 560–665 (FREKVLLRVV…KNPIAGERII (106 aa)) constitute a tRNA-binding domain.

It belongs to the class-I aminoacyl-tRNA synthetase family. MetG type 1 subfamily. As to quaternary structure, homodimer. The cofactor is Zn(2+).

It is found in the cytoplasm. The enzyme catalyses tRNA(Met) + L-methionine + ATP = L-methionyl-tRNA(Met) + AMP + diphosphate. Is required not only for elongation of protein synthesis but also for the initiation of all mRNA translation through initiator tRNA(fMet) aminoacylation. In Borreliella afzelii (strain PKo) (Borrelia afzelii), this protein is Methionine--tRNA ligase.